Reading from the N-terminus, the 512-residue chain is mRNA export factor (512 aa).

Residues 1–242 (MATDIDMLID…PVPERKAPSA (242 aa)) form a disordered region. The short motif at 5–17 (IDMLIDLGLDLSD) is the Nuclear export signal element. A phosphoserine; by host mark is found at serine 16 and serine 18. 2 stretches are compositionally biased toward acidic residues: residues 16-28 (SDSE…LERD) and 36-55 (PESD…EDPC). The tract at residues 104–112 (VWSRLGTRR) is interaction with host ALYREF. The Nuclear localization signal signature appears at 110-138 (TRRSASPREPHGGKVARIQPPSTKAPHPR). Phosphoserine; by host is present on serine 113. Over residues 135–149 (PHPRGGRRGRRRGRG) the composition is skewed to basic residues. At arginine 138 the chain carries Dimethylated arginine; by host. The segment at 138–152 (RGGRRGRRRGRGRYG) is RGG-box. An Omega-N-methylarginine; by host modification is found at arginine 148. Arginine 150 carries the dimethylated arginine; by host modification. Over residues 228 to 240 (ADGRAPVPERKAP) the composition is skewed to basic and acidic residues. Zn(2+) contacts are provided by cysteine 400, histidine 479, cysteine 483, and cysteine 488. The CHC2-type zinc-finger motif lies at 400–488 (CYLKARGLCG…HRQECSSRVC (89 aa)).

It belongs to the HHV-1 ICP27 protein family. In terms of assembly, interacts with host RBP1; this interaction facilitates the RNA polymerase recruitment to viral transcription sites. Interacts (via the RGG box) with host ALYREF/THOC4; this interaction recruits ALYREF to viral replication compartments and probably directs viral mRNA to the TAP/NFX1 pathway. Interacts (via the RGG box) with host SRPK1; this interaction relocalizes SRPK1 to the nucleus and seems to alter its activity. Interacts with ICP4; this interaction modulates ICP4 DNA-binding activity. Interacts with host NXF1; this interaction allows efficient export of HSV-1 early and late transcripts. Interacts with host IRF3; this interaction inhibits IRF3 phosphorylation and nuclear translocation. In terms of processing, methylated within the RGG box possibly by host PRMT1. When hypomethylated, ICP27 is exported to the cytoplasm earlier and more rapidly. Phosphorylated.

The protein localises to the host cytoplasm. It localises to the host nucleus. Multifunctional regulator of the expression of viral genes that contributes to the shutoff of host protein synthesis and mediates nuclear export of viral intronless mRNAs. Also stimulates translation of viral transcripts. Independently, plays a role in the regulation of virion release. Also plays a role in the inhibition of host innate immune response by targeting host IRF3 and thereby preventing production of beta-interferon. Silences the 3' splice site of the host promyelocytic leukemia (PML) intron 7a, thereby switching PML isoforms from PML-II to PML-V. This could be linked to the accelerated mRNA export induced by ICP27 which might not provide sufficient time for PML pre-mRNA to be spliced in the nucleus. Also suppresses splicing of the viral ICP34.5 mRNA, allowing the virus to express a variant form of ICP34.5. The chain is mRNA export factor from Human herpesvirus 2 (strain HG52) (HHV-2).